A 264-amino-acid polypeptide reads, in one-letter code: 1-acyl-sn-glycerol-3-phosphate acyltransferase (264 aa).

A helical transmembrane segment spans residues M16 to A36. An HXXXXD motif motif is present at residues H57 to D62. Residues L233–I253 traverse the membrane as a helical segment.

It belongs to the 1-acyl-sn-glycerol-3-phosphate acyltransferase family.

The protein localises to the membrane. It carries out the reaction a fatty acyl-[ACP] + a 1-acyl-sn-glycero-3-phosphate = a 1,2-diacyl-sn-glycero-3-phosphate + holo-[ACP]. The catalysed reaction is hexadecanoyl-[ACP] + 1-hexadecanoyl-sn-glycero-3-phosphate = 1,2-dihexadecanoyl-sn-glycero-3-phosphate + holo-[ACP]. The protein operates within lipid metabolism; phospholipid metabolism. In terms of biological role, converts lysophosphatidic acid (LPA) into phosphatidic acid (PA) by incorporating an acyl moiety at the 2 position. This enzyme utilizes acyl-ACP as fatty acyl donor, but not acyl-CoA. The polypeptide is 1-acyl-sn-glycerol-3-phosphate acyltransferase (plsC) (Streptococcus pneumoniae (strain ATCC BAA-255 / R6)).